Reading from the N-terminus, the 580-residue chain is Kelch-like protein 38 (580 aa).

The 68-residue stretch at 34–101 (TDVSICSGAC…VYTGEVHISA (68 aa)) folds into the BTB domain. Residues 136-237 (CLGLVRLAEI…HPAFFHHFIA (102 aa)) form the BACK domain. Kelch repeat units lie at residues 284-331 (FLLL…TLHR), 333-382 (VYVL…THRN), 383-430 (FIFS…VKDQ), 432-478 (LYLF…VLGE), 479-520 (KIII…VMGN), and 522-572 (LYVT…TLQC).

The polypeptide is Kelch-like protein 38 (Klhl38) (Rattus norvegicus (Rat)).